The chain runs to 285 residues: uncharacterized protein (285 aa).

A run of 7 helical transmembrane segments spans residues 6–26 (YLVV…TPLI), 38–58 (VFAA…YIFP), 84–104 (IFLL…IFLR), 110–130 (GVLA…ELIF), 153–173 (FMMH…DDGF), 176–196 (ISFF…ALMV), and 236–256 (LIFG…TVLV).

It localises to the cell membrane. This is an uncharacterized protein from Mycoplasma pneumoniae (strain ATCC 29342 / M129 / Subtype 1) (Mycoplasmoides pneumoniae).